The chain runs to 492 residues: AAA-ATPase At3g28520 (492 aa).

Residues 7–25 (IWGFTSTTMASIMFLWPMY) traverse the membrane as a helical segment. Position 249 to 256 (249 to 256 (GPPGTGKS)) interacts with ATP. 2 disordered regions span residues 313–334 (KKKKEEDEDKEEKKEAENLKRV) and 462–492 (KIEKEARKNKKKAEDNVKQEKQNKVKGMVTK). Basic and acidic residues-rich tracts occupy residues 323–332 (EEKKEAENLK) and 462–484 (KIEKEARKNKKKAEDNVKQEKQN).

Belongs to the AAA ATPase family. BCS1 subfamily. Mg(2+) is required as a cofactor.

It localises to the membrane. The enzyme catalyses ATP + H2O = ADP + phosphate + H(+). The protein is AAA-ATPase At3g28520 of Arabidopsis thaliana (Mouse-ear cress).